A 199-amino-acid chain; its full sequence is Large ribosomal subunit protein bL25 (199 aa).

Belongs to the bacterial ribosomal protein bL25 family. CTC subfamily. As to quaternary structure, part of the 50S ribosomal subunit; part of the 5S rRNA/L5/L18/L25 subcomplex. Contacts the 5S rRNA. Binds to the 5S rRNA independently of L5 and L18.

Its function is as follows. This is one of the proteins that binds to the 5S RNA in the ribosome where it forms part of the central protuberance. The sequence is that of Large ribosomal subunit protein bL25 from Rickettsia akari (strain Hartford).